An 89-amino-acid polypeptide reads, in one-letter code: MSLHQERKSELVSKFRTHESDTGSPEVQVALLSERITMLTEHFKTHKKDHHSRRGLLKLVGQRRRLLDYLKSKDVARYKKLIDGLGIRK.

Residues 1 to 21 (MSLHQERKSELVSKFRTHESD) show a composition bias toward basic and acidic residues. The tract at residues 1–25 (MSLHQERKSELVSKFRTHESDTGSP) is disordered.

The protein belongs to the universal ribosomal protein uS15 family. In terms of assembly, part of the 30S ribosomal subunit. Forms a bridge to the 50S subunit in the 70S ribosome, contacting the 23S rRNA.

In terms of biological role, one of the primary rRNA binding proteins, it binds directly to 16S rRNA where it helps nucleate assembly of the platform of the 30S subunit by binding and bridging several RNA helices of the 16S rRNA. Forms an intersubunit bridge (bridge B4) with the 23S rRNA of the 50S subunit in the ribosome. The chain is Small ribosomal subunit protein uS15 from Myxococcus xanthus (strain DK1622).